Reading from the N-terminus, the 247-residue chain is MLRRVTLKETWEVAKNIKAFRFDEKLDFTPGQFIMVWLPGVNEKPFSLADKDLIVVKRVGPFTSKLFTLEEGDYLWIRGPYGNGFKEVKGKVALVAGGIGIPPIYALAKHGKLEEKVLIYGARGKDELALLDIENYVDEIVITTDDGSYGIKGFPTDVLAKRKEEFSQVYACGPEIMLAKVLEIMNYERTQISAERYMKCGIGICGSCALGPYLVCRDGPVFTGEQLKDTEFGKFTRLPDGRIKGLR.

Positions 1–87 (MLRRVTLKET…RGPYGNGFKE (87 aa)) constitute an FAD-binding FR-type domain. Positions 200, 205, 208, and 216 each coordinate [2Fe-2S] cluster.

This sequence belongs to the PyrK family. In terms of assembly, heterotetramer of 2 PyrK and 2 PyrD type B subunits. [2Fe-2S] cluster serves as cofactor. The cofactor is FAD.

The protein operates within pyrimidine metabolism; UMP biosynthesis via de novo pathway; orotate from (S)-dihydroorotate (NAD(+) route): step 1/1. In terms of biological role, responsible for channeling the electrons from the oxidation of dihydroorotate from the FMN redox center in the PyrD type B subunit to the ultimate electron acceptor NAD(+). The polypeptide is Probable dihydroorotate dehydrogenase B (NAD(+)), electron transfer subunit (Pyrococcus horikoshii (strain ATCC 700860 / DSM 12428 / JCM 9974 / NBRC 100139 / OT-3)).